Consider the following 215-residue polypeptide: Probable nicotinate-nucleotide adenylyltransferase (215 aa).

This sequence belongs to the NadD family.

It catalyses the reaction nicotinate beta-D-ribonucleotide + ATP + H(+) = deamido-NAD(+) + diphosphate. Its pathway is cofactor biosynthesis; NAD(+) biosynthesis; deamido-NAD(+) from nicotinate D-ribonucleotide: step 1/1. In terms of biological role, catalyzes the reversible adenylation of nicotinate mononucleotide (NaMN) to nicotinic acid adenine dinucleotide (NaAD). This chain is Probable nicotinate-nucleotide adenylyltransferase, found in Shewanella putrefaciens (strain CN-32 / ATCC BAA-453).